We begin with the raw amino-acid sequence, 591 residues long: ESX-1 secretion system protein EccCb1 (591 aa).

FtsK domains are found at residues 65–259 and 359–545; these read LQDV…NETQ and LTPA…EKQE. Residues 84–91 and 376–383 contribute to the ATP site; these read GAPQTGKS and GAAKSGKT.

Part of the ESX-1 / type VII secretion system (T7SS), which is composed of cytosolic and membrane components. The ESX-1 membrane complex is composed of EccB1, EccCa1, EccCb1, EccD1 and EccE1. Interacts with EccCa1, EspK and the C-terminus of EsxB. Residues 1-261 interact with EsxB and an artificial EsxB-EsxA heterodimer.

The protein resides in the cytoplasm. With respect to regulation, esxB binding to the second FtsK domain of EccCb1 causes multimerization; a subsequent unknown step relieves the allosteric inhibition of linker 2 on FtsK domain 1 (in EccCa1 subunit), activating the ATPase activity. In terms of biological role, part of the ESX-1 specialized secretion system, which delivers several virulence factors to host cells during infection, including the key virulence factors EsxA (ESAT-6) and EsxB (CFP-10). EccCb1 may link the cytosolic components of the system with the membrane components. The polypeptide is ESX-1 secretion system protein EccCb1 (Mycobacterium tuberculosis (strain ATCC 25618 / H37Rv)).